Reading from the N-terminus, the 155-residue chain is NADPH-dependent 7-cyano-7-deazaguanine reductase (155 aa).

Cysteine 53 (thioimide intermediate) is an active-site residue. Aspartate 60 functions as the Proton donor in the catalytic mechanism. Substrate contacts are provided by residues 75–77 and 94–95; these read VES and HE.

It belongs to the GTP cyclohydrolase I family. QueF type 1 subfamily.

Its subcellular location is the cytoplasm. It carries out the reaction 7-aminomethyl-7-carbaguanine + 2 NADP(+) = 7-cyano-7-deazaguanine + 2 NADPH + 3 H(+). It functions in the pathway tRNA modification; tRNA-queuosine biosynthesis. In terms of biological role, catalyzes the NADPH-dependent reduction of 7-cyano-7-deazaguanine (preQ0) to 7-aminomethyl-7-deazaguanine (preQ1). The polypeptide is NADPH-dependent 7-cyano-7-deazaguanine reductase (Brucella suis (strain ATCC 23445 / NCTC 10510)).